We begin with the raw amino-acid sequence, 507 residues long: ATP synthase subunit alpha, chloroplastic (507 aa).

170–177 (GDRQTGKT) provides a ligand contact to ATP. Position 257 is a phosphothreonine (Thr257).

It belongs to the ATPase alpha/beta chains family. In terms of assembly, F-type ATPases have 2 components, CF(1) - the catalytic core - and CF(0) - the membrane proton channel. CF(1) has five subunits: alpha(3), beta(3), gamma(1), delta(1), epsilon(1). CF(0) has four main subunits: a, b, b' and c.

It is found in the plastid. The protein localises to the chloroplast thylakoid membrane. The enzyme catalyses ATP + H2O + 4 H(+)(in) = ADP + phosphate + 5 H(+)(out). Produces ATP from ADP in the presence of a proton gradient across the membrane. The alpha chain is a regulatory subunit. This Crucihimalaya wallichii (Rock-cress) protein is ATP synthase subunit alpha, chloroplastic.